Reading from the N-terminus, the 299-residue chain is Lathosterol oxidase (299 aa).

The next 3 membrane-spanning stretches (helical) occupy residues 32-52 (ISLL…CATL), 79-99 (FTVQ…LLEI), and 117-137 (FELV…IYWI). In terms of domain architecture, Fatty acid hydroxylase spans 124 to 252 (ISFLFFTDMF…YFTLWDRIGG (129 aa)). The Histidine box-1 signature appears at 138–143 (HRGLHH). Positions 151-155 (HKPHH) match the Histidine box-2 motif. The chain crosses the membrane as a helical span at residues 186 to 206 (IFPLHKVVYLSLYILVNIWTI). Residues 228–233 (HHTDHH) carry the Histidine box-3 motif. Serine 253 carries the post-translational modification Phosphoserine. Residues 274–299 (EGKRSSHSGNGCKNEKLFNGEFTKTE) are disordered. Basic and acidic residues predominate over residues 286 to 299 (KNEKLFNGEFTKTE).

This sequence belongs to the sterol desaturase family. Fe cation serves as cofactor.

It localises to the endoplasmic reticulum membrane. It carries out the reaction a Delta(7)-sterol + 2 Fe(II)-[cytochrome b5] + O2 + 2 H(+) = a Delta(5),Delta(7)-sterol + 2 Fe(III)-[cytochrome b5] + 2 H2O. The catalysed reaction is lathosterol + 2 Fe(II)-[cytochrome b5] + O2 + 2 H(+) = 7-dehydrocholesterol + 2 Fe(III)-[cytochrome b5] + 2 H2O. It catalyses the reaction 5alpha-cholesta-7,24-dien-3beta-ol + 2 Fe(II)-[cytochrome b5] + O2 + 2 H(+) = 7-dehydrodesmosterol + 2 Fe(III)-[cytochrome b5] + 2 H2O. Its pathway is steroid biosynthesis; cholesterol biosynthesis. In terms of biological role, catalyzes the penultimate step of the biosynthesis of cholesterol, the dehydrogenation of lathosterol into 7-dehydrocholesterol (7-DHC). Cholesterol is the major sterol component in mammalian membranes and a precursor for bile acid and steroid hormone synthesis. In addition to its essential role in cholesterol biosynthesis, it also indirectly regulates ferroptosis through the production of 7-DHC. By diverting the spread of damage caused by peroxyl radicals from the phospholipid components to its sterol nucleus, 7-DHC prevents this form of cell death. The sequence is that of Lathosterol oxidase from Homo sapiens (Human).